A 439-amino-acid chain; its full sequence is Ribosomal protein uS12 methylthiotransferase RimO (439 aa).

The MTTase N-terminal domain occupies 7–122 (QTIAVIALGC…LPDLVFGKNF (116 aa)). [4Fe-4S] cluster-binding residues include Cys16, Cys52, Cys85, Cys155, Cys159, and Cys162. Positions 141–369 (SSTIPSAYLK…NAQYNIFQAK (229 aa)) constitute a Radical SAM core domain.

The protein belongs to the methylthiotransferase family. RimO subfamily. It depends on [4Fe-4S] cluster as a cofactor.

The protein localises to the cytoplasm. It catalyses the reaction L-aspartate(89)-[ribosomal protein uS12]-hydrogen + (sulfur carrier)-SH + AH2 + 2 S-adenosyl-L-methionine = 3-methylsulfanyl-L-aspartate(89)-[ribosomal protein uS12]-hydrogen + (sulfur carrier)-H + 5'-deoxyadenosine + L-methionine + A + S-adenosyl-L-homocysteine + 2 H(+). Its function is as follows. Catalyzes the methylthiolation of an aspartic acid residue of ribosomal protein uS12. In Endomicrobium trichonymphae, this protein is Ribosomal protein uS12 methylthiotransferase RimO.